Reading from the N-terminus, the 122-residue chain is Large ribosomal subunit protein uL14 (122 aa).

This sequence belongs to the universal ribosomal protein uL14 family. Part of the 50S ribosomal subunit. Forms a cluster with proteins L3 and L19. In the 70S ribosome, L14 and L19 interact and together make contacts with the 16S rRNA in bridges B5 and B8.

Functionally, binds to 23S rRNA. Forms part of two intersubunit bridges in the 70S ribosome. The chain is Large ribosomal subunit protein uL14 from Marinobacter nauticus (strain ATCC 700491 / DSM 11845 / VT8) (Marinobacter aquaeolei).